A 131-amino-acid polypeptide reads, in one-letter code: Large ribosomal subunit protein bL12 (131 aa).

It belongs to the bacterial ribosomal protein bL12 family. In terms of assembly, homodimer. Part of the ribosomal stalk of the 50S ribosomal subunit. Forms a multimeric L10(L12)X complex, where L10 forms an elongated spine to which 2 to 4 L12 dimers bind in a sequential fashion. Binds GTP-bound translation factors.

In terms of biological role, forms part of the ribosomal stalk which helps the ribosome interact with GTP-bound translation factors. Is thus essential for accurate translation. This chain is Large ribosomal subunit protein bL12, found in Prochlorococcus marinus (strain NATL1A).